Here is a 224-residue protein sequence, read N- to C-terminus: Proteasome subunit beta (224 aa).

The propeptide at 1-6 (MDVMKG) is removed in mature form; by autocatalysis. The active-site Nucleophile is T7.

The protein belongs to the peptidase T1B family. In terms of assembly, the 20S proteasome core is composed of 14 alpha and 14 beta subunits that assemble into four stacked heptameric rings, resulting in a barrel-shaped structure. The two inner rings, each composed of seven catalytic beta subunits, are sandwiched by two outer rings, each composed of seven alpha subunits. The catalytic chamber with the active sites is on the inside of the barrel. Has a gated structure, the ends of the cylinder being occluded by the N-termini of the alpha-subunits. Is capped at one or both ends by the proteasome regulatory ATPase, PAN.

The protein localises to the cytoplasm. It catalyses the reaction Cleavage of peptide bonds with very broad specificity.. The formation of the proteasomal ATPase PAN-20S proteasome complex, via the docking of the C-termini of PAN into the intersubunit pockets in the alpha-rings, triggers opening of the gate for substrate entry. Interconversion between the open-gate and close-gate conformations leads to a dynamic regulation of the 20S proteasome proteolysis activity. Its function is as follows. Component of the proteasome core, a large protease complex with broad specificity involved in protein degradation. The M.jannaschii proteasome is able to cleave oligopeptides after Glu, Asp, Tyr, Phe, Trp, slightly after Arg, but not after Ala. Thus, displays caspase-like and chymotrypsin-like activities and low level of trypsin-like activity. The polypeptide is Proteasome subunit beta (Methanocaldococcus jannaschii (strain ATCC 43067 / DSM 2661 / JAL-1 / JCM 10045 / NBRC 100440) (Methanococcus jannaschii)).